We begin with the raw amino-acid sequence, 692 residues long: Elongation factor G (692 aa).

The 275-residue stretch at 8–282 (EKTRNIGIMA…AVIDYLPSPL (275 aa)) folds into the tr-type G domain. GTP is bound by residues 17–24 (AHVDAGKT), 81–85 (DTPGH), and 135–138 (NKMD).

It belongs to the TRAFAC class translation factor GTPase superfamily. Classic translation factor GTPase family. EF-G/EF-2 subfamily.

It localises to the cytoplasm. Functionally, catalyzes the GTP-dependent ribosomal translocation step during translation elongation. During this step, the ribosome changes from the pre-translocational (PRE) to the post-translocational (POST) state as the newly formed A-site-bound peptidyl-tRNA and P-site-bound deacylated tRNA move to the P and E sites, respectively. Catalyzes the coordinated movement of the two tRNA molecules, the mRNA and conformational changes in the ribosome. The polypeptide is Elongation factor G (Streptococcus agalactiae serotype III (strain NEM316)).